Consider the following 148-residue polypeptide: Large ribosomal subunit protein bL9 (148 aa).

This sequence belongs to the bacterial ribosomal protein bL9 family.

Its function is as follows. Binds to the 23S rRNA. This is Large ribosomal subunit protein bL9 from Hahella chejuensis (strain KCTC 2396).